Reading from the N-terminus, the 88-residue chain is Small ribosomal subunit protein uS17 (88 aa).

It belongs to the universal ribosomal protein uS17 family. As to quaternary structure, part of the 30S ribosomal subunit.

One of the primary rRNA binding proteins, it binds specifically to the 5'-end of 16S ribosomal RNA. The sequence is that of Small ribosomal subunit protein uS17 from Xylella fastidiosa (strain M23).